The following is a 138-amino-acid chain: Putative pre-16S rRNA nuclease (138 aa).

Belongs to the YqgF nuclease family.

It is found in the cytoplasm. Functionally, could be a nuclease involved in processing of the 5'-end of pre-16S rRNA. The sequence is that of Putative pre-16S rRNA nuclease from Caldicellulosiruptor bescii (strain ATCC BAA-1888 / DSM 6725 / KCTC 15123 / Z-1320) (Anaerocellum thermophilum).